Reading from the N-terminus, the 49-residue chain is Large ribosomal subunit protein bL33A (49 aa).

It belongs to the bacterial ribosomal protein bL33 family.

This chain is Large ribosomal subunit protein bL33A, found in Mycoplasmopsis agalactiae (strain NCTC 10123 / CIP 59.7 / PG2) (Mycoplasma agalactiae).